The primary structure comprises 299 residues: Tyrosine recombinase XerC (299 aa).

Positions 1–85 constitute a Core-binding (CB) domain; the sequence is MKRQLEAYCA…AVRGLYRYLN (85 aa). A Tyr recombinase domain is found at 106–285; it reads RLPKVLDTDR…DFQHLAAVYD (180 aa). Residues R146, K170, H237, R240, and H263 contribute to the active site. The active-site O-(3'-phospho-DNA)-tyrosine intermediate is Y272.

It belongs to the 'phage' integrase family. XerC subfamily. In terms of assembly, forms a cyclic heterotetrameric complex composed of two molecules of XerC and two molecules of XerD.

Its subcellular location is the cytoplasm. Site-specific tyrosine recombinase, which acts by catalyzing the cutting and rejoining of the recombining DNA molecules. The XerC-XerD complex is essential to convert dimers of the bacterial chromosome into monomers to permit their segregation at cell division. It also contributes to the segregational stability of plasmids. The polypeptide is Tyrosine recombinase XerC (Pseudomonas putida (strain ATCC 700007 / DSM 6899 / JCM 31910 / BCRC 17059 / LMG 24140 / F1)).